Here is a 236-residue protein sequence, read N- to C-terminus: Ribonuclease 3 (236 aa).

Residues 8–130 (FRRLSQALDY…TFAAVSFDAD (123 aa)) enclose the RNase III domain. Glu-43 is a binding site for Mg(2+). Asp-47 is a catalytic residue. Residues Asp-116 and Glu-119 each coordinate Mg(2+). Glu-119 is an active-site residue. One can recognise a DRBM domain in the interval 157 to 227 (DAKTRLQEAL…AEAALTLLEQ (71 aa)).

It belongs to the ribonuclease III family. In terms of assembly, homodimer. Requires Mg(2+) as cofactor.

Its subcellular location is the cytoplasm. It catalyses the reaction Endonucleolytic cleavage to 5'-phosphomonoester.. Functionally, digests double-stranded RNA. Involved in the processing of primary rRNA transcript to yield the immediate precursors to the large and small rRNAs (23S and 16S). Processes some mRNAs, and tRNAs when they are encoded in the rRNA operon. Processes pre-crRNA and tracrRNA of type II CRISPR loci if present in the organism. The sequence is that of Ribonuclease 3 from Chromobacterium violaceum (strain ATCC 12472 / DSM 30191 / JCM 1249 / CCUG 213 / NBRC 12614 / NCIMB 9131 / NCTC 9757 / MK).